Reading from the N-terminus, the 121-residue chain is Large ribosomal subunit protein bL12 (121 aa).

It belongs to the bacterial ribosomal protein bL12 family. As to quaternary structure, homodimer. Part of the ribosomal stalk of the 50S ribosomal subunit. Forms a multimeric L10(L12)X complex, where L10 forms an elongated spine to which 2 to 4 L12 dimers bind in a sequential fashion. Binds GTP-bound translation factors.

In terms of biological role, forms part of the ribosomal stalk which helps the ribosome interact with GTP-bound translation factors. Is thus essential for accurate translation. In Aliivibrio salmonicida (strain LFI1238) (Vibrio salmonicida (strain LFI1238)), this protein is Large ribosomal subunit protein bL12.